The following is a 1029-amino-acid chain: Kinesin-like protein KIF17 (1029 aa).

A Kinesin motor domain is found at 5-335 (AVKVVVRCRP…LRYANRAKNI (331 aa)). 91–98 (GQTGSGKS) is a binding site for ATP. Positions 346–462 (KDALLREYQE…EENLRKETEA (117 aa)) form a coiled coil. Disordered stretches follow at residues 523 to 569 (ELPK…MPTE) and 647 to 673 (VPAP…PPRP). Residues 532-551 (SEISLGSSESSSLEETSVSE) are compositionally biased toward low complexity. Over residues 657-673 (SDARPEAEAADDFPPRP) the composition is skewed to basic and acidic residues. A coiled-coil region spans residues 739-846 (QQVLARLQLL…QLEKIDYLAT (108 aa)). Disordered stretches follow at residues 908-931 (AVST…EPNM) and 968-1029 (KSLT…SEPL).

It belongs to the TRAFAC class myosin-kinesin ATPase superfamily. Kinesin family. In terms of assembly, homodimer. Interacts with APBA1 (via PDZ domain); the interaction is direct and is required for association of KIF17 with the cargo that is to be transported. Interacts with IFT B complex components IFT52 and IFT57. Interacts with IFT70B. Interacts with PIWIL1. Interacts with TBATA.

The protein resides in the cytoplasm. The protein localises to the cytoskeleton. Its subcellular location is the cell projection. It localises to the cilium. It is found in the dendrite. Its function is as follows. Dendrite-specific motor protein which, in association with the Apba1-containing complex (LIN-10-LIN-2-LIN-7 complex), transports vesicles containing N-methyl-D-aspartate (NMDA) receptor subunit NR2B along microtubules. This Homo sapiens (Human) protein is Kinesin-like protein KIF17 (KIF17).